The following is a 316-amino-acid chain: 4-hydroxy-3-methylbut-2-enyl diphosphate reductase (316 aa).

A [4Fe-4S] cluster-binding site is contributed by Cys12. The (2E)-4-hydroxy-3-methylbut-2-enyl diphosphate site is built by His41 and His74. The dimethylallyl diphosphate site is built by His41 and His74. Positions 41 and 74 each coordinate isopentenyl diphosphate. A [4Fe-4S] cluster-binding site is contributed by Cys96. His124 provides a ligand contact to (2E)-4-hydroxy-3-methylbut-2-enyl diphosphate. Residue His124 coordinates dimethylallyl diphosphate. Residue His124 coordinates isopentenyl diphosphate. The active-site Proton donor is the Glu126. Residue Thr167 coordinates (2E)-4-hydroxy-3-methylbut-2-enyl diphosphate. Cys197 lines the [4Fe-4S] cluster pocket. Residues Ser225, Ser226, Asn227, and Ser269 each contribute to the (2E)-4-hydroxy-3-methylbut-2-enyl diphosphate site. Dimethylallyl diphosphate contacts are provided by Ser225, Ser226, Asn227, and Ser269. Residues Ser225, Ser226, Asn227, and Ser269 each contribute to the isopentenyl diphosphate site.

It belongs to the IspH family. As to quaternary structure, homodimer. Requires [4Fe-4S] cluster as cofactor.

It catalyses the reaction isopentenyl diphosphate + 2 oxidized [2Fe-2S]-[ferredoxin] + H2O = (2E)-4-hydroxy-3-methylbut-2-enyl diphosphate + 2 reduced [2Fe-2S]-[ferredoxin] + 2 H(+). It carries out the reaction dimethylallyl diphosphate + 2 oxidized [2Fe-2S]-[ferredoxin] + H2O = (2E)-4-hydroxy-3-methylbut-2-enyl diphosphate + 2 reduced [2Fe-2S]-[ferredoxin] + 2 H(+). It participates in isoprenoid biosynthesis; dimethylallyl diphosphate biosynthesis; dimethylallyl diphosphate from (2E)-4-hydroxy-3-methylbutenyl diphosphate: step 1/1. Its pathway is isoprenoid biosynthesis; isopentenyl diphosphate biosynthesis via DXP pathway; isopentenyl diphosphate from 1-deoxy-D-xylulose 5-phosphate: step 6/6. In terms of biological role, catalyzes the conversion of 1-hydroxy-2-methyl-2-(E)-butenyl 4-diphosphate (HMBPP) into a mixture of isopentenyl diphosphate (IPP) and dimethylallyl diphosphate (DMAPP). Acts in the terminal step of the DOXP/MEP pathway for isoprenoid precursor biosynthesis. In Pectobacterium carotovorum subsp. carotovorum (strain PC1), this protein is 4-hydroxy-3-methylbut-2-enyl diphosphate reductase.